A 399-amino-acid polypeptide reads, in one-letter code: Protein IQ-DOMAIN 25 (399 aa).

The Nuclear localization signal motif lies at 1 to 8 (MRKNLTKL). Calmodulin-binding stretches follow at residues 81 to 91 (KERRTHAIAVA) and 99 to 110 (DAAVAAAKAAAA). IQ domains lie at 130 to 158 (EHRA…GVVK) and 159 to 181 (IQAL…SMEA). Disordered stretches follow at residues 198 to 219 (NGNA…ENRN), 262 to 302 (SPLS…SPAR), and 346 to 377 (LRSH…VRMQ). Residues 285–294 (KFPTAQSTPR) are compositionally biased toward polar residues.

Belongs to the IQD family. In terms of assembly, binds to multiple calmodulin (CaM) in the presence of Ca(2+) and CaM-like proteins.

The protein resides in the nucleus. The protein localises to the cell membrane. Its function is as follows. May be involved in cooperative interactions with calmodulins or calmodulin-like proteins. Recruits calmodulin proteins to microtubules, thus being a potential scaffold in cellular signaling and trafficking. May associate with nucleic acids and regulate gene expression at the transcriptional or post-transcriptional level. The sequence is that of Protein IQ-DOMAIN 25 from Arabidopsis thaliana (Mouse-ear cress).